Consider the following 340-residue polypeptide: Glycerol-3-phosphate dehydrogenase [NAD(P)+] (340 aa).

4 residues coordinate NADPH: Ser-11, Trp-12, Arg-33, and Lys-106. Lys-106, Gly-137, and Ser-139 together coordinate sn-glycerol 3-phosphate. Ala-141 contacts NADPH. Sn-glycerol 3-phosphate-binding residues include Lys-192, Asp-245, Ser-255, Arg-256, and Asn-257. Catalysis depends on Lys-192, which acts as the Proton acceptor. Position 256 (Arg-256) interacts with NADPH. 2 residues coordinate NADPH: Val-280 and Glu-282.

This sequence belongs to the NAD-dependent glycerol-3-phosphate dehydrogenase family.

The protein localises to the cytoplasm. The enzyme catalyses sn-glycerol 3-phosphate + NAD(+) = dihydroxyacetone phosphate + NADH + H(+). It carries out the reaction sn-glycerol 3-phosphate + NADP(+) = dihydroxyacetone phosphate + NADPH + H(+). Its pathway is membrane lipid metabolism; glycerophospholipid metabolism. Functionally, catalyzes the reduction of the glycolytic intermediate dihydroxyacetone phosphate (DHAP) to sn-glycerol 3-phosphate (G3P), the key precursor for phospholipid synthesis. This Bacillus cereus (strain B4264) protein is Glycerol-3-phosphate dehydrogenase [NAD(P)+].